Here is a 371-residue protein sequence, read N- to C-terminus: tRNA (guanine(26)-N(2))-dimethyltransferase (371 aa).

A Trm1 methyltransferase domain is found at 4 to 368 (VEVTEGRTRF…APLPVLEKVV (365 aa)). S-adenosyl-L-methionine contacts are provided by R41, R66, D82, D108, and A109. Zn(2+) contacts are provided by C237, C240, C256, and C259.

It belongs to the class I-like SAM-binding methyltransferase superfamily. Trm1 family.

The enzyme catalyses guanosine(26) in tRNA + 2 S-adenosyl-L-methionine = N(2)-dimethylguanosine(26) in tRNA + 2 S-adenosyl-L-homocysteine + 2 H(+). In terms of biological role, dimethylates a single guanine residue at position 26 of a number of tRNAs using S-adenosyl-L-methionine as donor of the methyl groups. This chain is tRNA (guanine(26)-N(2))-dimethyltransferase, found in Methanoculleus marisnigri (strain ATCC 35101 / DSM 1498 / JR1).